A 424-amino-acid polypeptide reads, in one-letter code: Imidazolonepropionase (424 aa).

2 residues coordinate Fe(3+): His84 and His86. The Zn(2+) site is built by His84 and His86. Arg93, Tyr156, and His189 together coordinate 4-imidazolone-5-propanoate. Residue Tyr156 participates in N-formimidoyl-L-glutamate binding. Residue His254 coordinates Fe(3+). His254 provides a ligand contact to Zn(2+). A 4-imidazolone-5-propanoate-binding site is contributed by Glu257. Residue Asp328 participates in Fe(3+) binding. Asp328 contacts Zn(2+). Asn330 and Gly332 together coordinate N-formimidoyl-L-glutamate. Ser333 lines the 4-imidazolone-5-propanoate pocket.

This sequence belongs to the metallo-dependent hydrolases superfamily. HutI family. It depends on Zn(2+) as a cofactor. Fe(3+) serves as cofactor.

Its subcellular location is the cytoplasm. The catalysed reaction is 4-imidazolone-5-propanoate + H2O = N-formimidoyl-L-glutamate. Its pathway is amino-acid degradation; L-histidine degradation into L-glutamate; N-formimidoyl-L-glutamate from L-histidine: step 3/3. Functionally, catalyzes the hydrolytic cleavage of the carbon-nitrogen bond in imidazolone-5-propanoate to yield N-formimidoyl-L-glutamate. It is the third step in the universal histidine degradation pathway. The sequence is that of Imidazolonepropionase from Geobacillus thermodenitrificans (strain NG80-2).